The following is a 1470-amino-acid chain: ABC transporter G family member 48 (1470 aa).

Residues methionine 1 to asparagine 47 form a disordered region. A compositionally biased stretch (polar residues) spans glycine 9–arginine 24. Residues glycine 172–glutamate 445 enclose the ABC transporter 1 domain. Glycine 205–serine 212 lines the ATP pocket. The ABC transmembrane type-2 1 domain maps to glutamate 523–phenylalanine 736. The next 6 helical transmembrane spans lie at phenylalanine 541–phenylalanine 561, phenylalanine 577–glutamine 597, valine 629–phenylalanine 649, phenylalanine 660–isoleucine 680, valine 686–isoleucine 706, and phenylalanine 772–leucine 792. A disordered region spans residues glutamine 828–threonine 852. Low complexity predominate over residues asparagine 832–serine 843. Residues leucine 869 to proline 1121 enclose the ABC transporter 2 domain. Position 914–921 (glycine 914–threonine 921) interacts with ATP. The ABC transmembrane type-2 2 domain maps to serine 1194–phenylalanine 1408. Helical transmembrane passes span alanine 1215–glutamine 1234, leucine 1249–valine 1271, valine 1301–tyrosine 1321, phenylalanine 1331–alanine 1351, alanine 1359–valine 1379, tryptophan 1389–glycine 1409, and phenylalanine 1439–glycine 1459.

This sequence belongs to the ABC transporter superfamily. ABCG family. PDR (TC 3.A.1.205) subfamily.

Its subcellular location is the membrane. May be a general defense protein. This is ABC transporter G family member 48 from Oryza sativa subsp. japonica (Rice).